A 515-amino-acid polypeptide reads, in one-letter code: Synaptic vesicular amine transporter (515 aa).

Topologically, residues 1-20 (MALSDLVLLRWLRDSRHSRK) are cytoplasmic. The chain crosses the membrane as a helical span at residues 21-41 (LILFIVFLALLLDNMLLTVVV). The Lumenal, vesicle portion of the chain corresponds to 42–130 (PIIPSYLYSI…EDRDLLNENV (89 aa)). Asn-56, Asn-80, Asn-81, Asn-89, and Asn-111 each carry an N-linked (GlcNAc...) asparagine glycan. A disulfide bridge connects residues Cys-118 and Cys-325. A helical membrane pass occupies residues 131 to 151 (QVGLLFASKATVQLLTNPFIG). At 152 to 160 (LLTNRIGYP) the chain is on the cytoplasmic side. Residues 161-181 (IPMFAGFCIMFISTVMFAFSS) traverse the membrane as a helical segment. The Lumenal, vesicle segment spans residues 182–190 (SYAFLLIAR). Residues 191–211 (SLQGIGSSCSSVAGMGMLASV) traverse the membrane as a helical segment. Residues 212–220 (YTDDEERGK) are Cytoplasmic-facing. The helical transmembrane segment at 221–243 (PMGIALGGLAMGVLVGPPFGSVL) threads the bilayer. Serotonin contacts are provided by Leu-229 and Val-233. Topologically, residues 244–249 (YEFVGK) are lumenal, vesicle. The chain crosses the membrane as a helical span at residues 250-272 (TAPFLVLAALVLLDGAIQLFVLQ). Residues 273 to 292 (PSRVQPESQKGTPLTTLLKD) are Cytoplasmic-facing. Residues 293–312 (PYILIAAGSICFANMGIAML) form a helical membrane-spanning segment. Serotonin is bound by residues Asn-306, Ile-309, Glu-313, Phe-335, and Tyr-342. The Lumenal, vesicle segment spans residues 313–329 (EPALPIWMMETMCSRKW). A helical membrane pass occupies residues 330–353 (QLGVAFLPASISYLIGTNIFGILA). The Cytoplasmic segment spans residues 354–358 (HKMGR). The chain crosses the membrane as a helical span at residues 359–379 (WLCALLGMVIVGISILCIPFA). The Lumenal, vesicle segment spans residues 380-390 (KNIYGLIAPNF). The helical transmembrane segment at 391–411 (GVGFAIGMVDSSMMPIMGYLV) threads the bilayer. Residue Asp-400 participates in serotonin binding. Residues 412-415 (DLRH) lie on the Cytoplasmic side of the membrane. The helical transmembrane segment at 416–436 (VSVYGSVYAIADVAFCMGYAI) threads the bilayer. Position 434 (Tyr-434) interacts with serotonin. Residues 437 to 441 (GPSAG) are Lumenal, vesicle-facing. A helical transmembrane segment spans residues 442–463 (GAIAKAIGFPWLMTIIGIIDIA). Residues 464–515 (FAPLCFFLRSPPAKEEKMAILMDHNCPIKRKMYTQNNVQSYPIGDDEESESD) lie on the Cytoplasmic side of the membrane. Ser-512 and Ser-514 each carry phosphoserine; by CK2.

Belongs to the major facilitator superfamily. Vesicular transporter family. As to quaternary structure, interacts with SLC6A3. As to expression, expressed in the substantia nigra and the tuberomammillary nucleus of the posterior hypothalamus. Expressed in stomach, in particular in varicose nerve fibers and enterochromaffin-like cells in the corpus region (at protein level).

It localises to the cytoplasmic vesicle. It is found in the secretory vesicle. Its subcellular location is the synaptic vesicle membrane. The protein resides in the secretory vesicle membrane. The protein localises to the cell projection. It localises to the axon. It is found in the dendrite. It carries out the reaction serotonin(in) + 2 H(+)(out) = serotonin(out) + 2 H(+)(in). It catalyses the reaction dopamine(in) + 2 H(+)(out) = dopamine(out) + 2 H(+)(in). The catalysed reaction is histamine(in) + 2 H(+)(out) = histamine(out) + 2 H(+)(in). Strongly inhibited by reserpine and tetrabenazine. Also inhibited to a lesser extent by ketanserin and fenfluramine. Reserpine and ketanserin inhibit by blocking the substrate-binding pocket. Tetrabenazine traps SLC18A2/VMAT2 in an occluded conformation and its inhibition is specific to SLC18A2/VMAT2 but not SLC18A1/VMAT1. Its function is as follows. Electrogenic antiporter that exchanges one cationic monoamine with two intravesicular protons across the membrane of secretory and synaptic vesicles. Uses the electrochemical proton gradient established by the V-type proton-pump ATPase to accumulate high concentrations of monoamines inside the vesicles prior to their release via exocytosis. Transports a variety of catecholamines such as dopamine, adrenaline and noradrenaline, histamine, and indolamines such as serotonin. Regulates the transvesicular monoaminergic gradient that determines the quantal size. Mediates somatodendritic dopamine release in hippocampal neurons, likely as part of a regulated secretory pathway that integrates retrograde synaptic signals. Acts as a primary transporter for striatal dopamine loading ensuring impulse-dependent release of dopamine at the synaptic cleft. Responsible for histamine and serotonin storage and subsequent corelease from mast cell granules. In Rattus norvegicus (Rat), this protein is Synaptic vesicular amine transporter (Slc18a2).